A 541-amino-acid chain; its full sequence is 1'-carboxy-chondrochloren decarboxylase (541 aa).

An FAD-binding PCMH-type domain is found at 39–226 (TTHRIPAIIS…TRMTIWLAPR (188 aa)).

The enzyme catalyses 1'-carboxy-chondrochloren A + FAD + 2 H(+) = chondrochloren A + FADH2 + CO2. It catalyses the reaction 1'-carboxy-chondrochloren B + FAD + 2 H(+) = chondrochloren B + FADH2 + CO2. The protein operates within antibiotic biosynthesis. Activity is not affected by the addition of EDTA or/and EGTA chelators or in the presence of external metals like Zn(2+), Mg(2+), Mn(2+) and Fe(2+). Activity is inhibited under low oxygen conditions. Oxidative decarboxylase involved in the biosynthesis of the antibiotics chondrochloren A and chondrochloren B. Catalyzes the decarboxylation of biologically inactive pre-chondrochloren A and pre-chondrochloren B to yield mature chondrochloren A and chondrochloren B, respectively. Cannot decarboxylate free L-tyrosine, 3-chloro-tyrosine or a number of chlorinated and non-chlorinated analog substrates containing variable N-acyl chains. This is 1'-carboxy-chondrochloren decarboxylase from Chondromyces crocatus.